The chain runs to 113 residues: Iron-sulfur cluster insertion protein ErpA (113 aa).

Positions 41, 105, and 107 each coordinate iron-sulfur cluster.

It belongs to the HesB/IscA family. As to quaternary structure, homodimer. Iron-sulfur cluster serves as cofactor.

In terms of biological role, required for insertion of 4Fe-4S clusters for at least IspG. The protein is Iron-sulfur cluster insertion protein ErpA of Actinobacillus pleuropneumoniae serotype 7 (strain AP76).